Consider the following 882-residue polypeptide: Pyruvate dehydrogenase E1 component (882 aa).

Homodimer. Part of the PDH complex, consisting of multiple copies of pyruvate dehydrogenase (E1), dihydrolipoamide acetyltransferase (E2) and lipoamide dehydrogenase (E3). The cofactor is thiamine diphosphate.

It catalyses the reaction N(6)-[(R)-lipoyl]-L-lysyl-[protein] + pyruvate + H(+) = N(6)-[(R)-S(8)-acetyldihydrolipoyl]-L-lysyl-[protein] + CO2. Functionally, component of the pyruvate dehydrogenase (PDH) complex, that catalyzes the overall conversion of pyruvate to acetyl-CoA and CO(2). This Pseudomonas aeruginosa (strain ATCC 15692 / DSM 22644 / CIP 104116 / JCM 14847 / LMG 12228 / 1C / PRS 101 / PAO1) protein is Pyruvate dehydrogenase E1 component (aceE).